We begin with the raw amino-acid sequence, 421 residues long: ATP-dependent RNA helicase eIF4A (421 aa).

The interval 1–26 (MSNDKGLEEIPEDQSTTPHKPTSNVG) is disordered. A compositionally biased stretch (polar residues) spans 13-26 (DQSTTPHKPTSNVG). A Q motif motif is present at residues 48-76 (DSFDAMELKPELLRGVYAYGFERPSAIQQ). The Helicase ATP-binding domain maps to 79–249 (IKPIIKGSDV…TKFMRDPVRI (171 aa)). An ATP-binding site is contributed by 92 to 99 (AQSGTGKT). The DEAD box motif lies at 197–200 (DEAD). One can recognise a Helicase C-terminal domain in the interval 260–421 (GIKQFYIAVE…EMPMNVADLI (162 aa)).

The protein belongs to the DEAD box helicase family. eIF4A subfamily. In terms of assembly, component of the eIF4F complex, which composition varies with external and internal environmental conditions. It is composed of at least eIF4A, eIF4E and eIF4G.

It localises to the cytoplasm. The enzyme catalyses ATP + H2O = ADP + phosphate + H(+). ATP-dependent RNA helicase which is a subunit of the eIF4F complex involved in cap recognition and is required for mRNA binding to ribosome. In the current model of translation initiation, eIF4A unwinds RNA secondary structures in the 5'-UTR of mRNAs which is necessary to allow efficient binding of the small ribosomal subunit, and subsequent scanning for the initiator codon. The protein is ATP-dependent RNA helicase eIF4A (tif1) of Aspergillus oryzae (strain ATCC 42149 / RIB 40) (Yellow koji mold).